A 314-amino-acid polypeptide reads, in one-letter code: Hydroxyacyl-coenzyme A dehydrogenase, mitochondrial (314 aa).

The N-terminal 12 residues, 1–12 (MAFVTRQFVRSM), are a transit peptide targeting the mitochondrion. NAD(+) contacts are provided by residues 34–39 (GGGLMG) and Asp-57. Position 73 (Ser-73) interacts with CoA. Lys-75 is subject to N6-acetyllysine. Lys-80 serves as a coordination point for CoA. Lys-80 carries the N6-succinyllysine modification. 2 positions are modified to N6-acetyllysine; alternate: Lys-81 and Lys-87. 2 positions are modified to N6-succinyllysine; alternate: Lys-81 and Lys-87. Glu-122 contributes to the NAD(+) binding site. Lys-125 bears the N6-acetyllysine mark. Lys-127 is an NAD(+) binding site. Residue Lys-127 is modified to N6-(2-hydroxyisobutyryl)lysine. Lys-136 bears the N6-acetyllysine; alternate mark. N6-succinyllysine; alternate is present on Lys-136. The NAD(+) site is built by Ser-149 and Asn-173. Ser-149 lines the CoA pocket. Lys-179 bears the N6-acetyllysine mark. Residues Lys-185, Lys-192, and Lys-202 each carry the N6-acetyllysine; alternate modification. N6-succinyllysine; alternate is present on residues Lys-185, Lys-192, and Lys-202. Lys-206 is modified (N6-succinyllysine). N6-acetyllysine; alternate is present on residues Lys-212 and Lys-241. N6-succinyllysine; alternate is present on residues Lys-212 and Lys-241. Lys-305 is an NAD(+) binding site. An N6-acetyllysine; alternate modification is found at Lys-312. Lys-312 carries the post-translational modification N6-succinyllysine; alternate.

The protein belongs to the 3-hydroxyacyl-CoA dehydrogenase family. In terms of assembly, homodimer. Interacts with GLUD1; this interaction inhibits the activation of glutamate dehydrogenase 1 (GLUD1). Post-translationally, succinylation at Lys-81, adjacent to a coenzyme A binding site. Desuccinylated by SIRT5.

The protein localises to the mitochondrion matrix. The catalysed reaction is a (3S)-3-hydroxyacyl-CoA + NAD(+) = a 3-oxoacyl-CoA + NADH + H(+). It carries out the reaction (3S)-3-hydroxybutanoyl-CoA + NAD(+) = acetoacetyl-CoA + NADH + H(+). It catalyses the reaction (3S)-hydroxydecanoyl-CoA + NAD(+) = 3-oxodecanoyl-CoA + NADH + H(+). The enzyme catalyses (3S)-hydroxyhexadecanoyl-CoA + NAD(+) = 3-oxohexadecanoyl-CoA + NADH + H(+). Its pathway is lipid metabolism; fatty acid beta-oxidation. In terms of biological role, mitochondrial fatty acid beta-oxidation enzyme that catalyzes the third step of the beta-oxidation cycle for medium and short-chain 3-hydroxy fatty acyl-CoAs (C4 to C10). Plays a role in the control of insulin secretion by inhibiting the activation of glutamate dehydrogenase 1 (GLUD1), an enzyme that has an important role in regulating amino acid-induced insulin secretion. Plays a role in the maintenance of normal spermatogenesis through the reduction of fatty acid accumulation in the testes. In Rattus norvegicus (Rat), this protein is Hydroxyacyl-coenzyme A dehydrogenase, mitochondrial (Hadh).